Reading from the N-terminus, the 235-residue chain is Large ribosomal subunit protein uL1 (235 aa).

It belongs to the universal ribosomal protein uL1 family. Part of the 50S ribosomal subunit.

Binds directly to 23S rRNA. The L1 stalk is quite mobile in the ribosome, and is involved in E site tRNA release. Functionally, protein L1 is also a translational repressor protein, it controls the translation of the L11 operon by binding to its mRNA. In Synechococcus sp. (strain CC9902), this protein is Large ribosomal subunit protein uL1.